Here is a 356-residue protein sequence, read N- to C-terminus: Arginine kinase Scy s 2 (356 aa).

Positions 9–91 constitute a Phosphagen kinase N-terminal domain; it reads KLEEGFKKLE…FDPIIEDYHK (83 aa). 64–68 contributes to the L-arginine binding site; it reads GVGVY. The region spanning 119 to 356 is the Phosphagen kinase C-terminal domain; sequence FVISTRVRCG…LELIKMEKEM (238 aa). Residues 122–126 and His-185 each bind ATP; that span reads STRVR. Glu-225 contacts L-arginine. An ATP-binding site is contributed by Arg-229. L-arginine is bound at residue Cys-271. ATP is bound by residues 280–284 and 309–314; these read RASVH and RGTRGE. Glu-314 contributes to the L-arginine binding site.

The protein belongs to the ATP:guanido phosphotransferase family. In terms of tissue distribution, muscle (at protein level).

It carries out the reaction L-arginine + ATP = N(omega)-phospho-L-arginine + ADP + H(+). Catalyzes the reversible transfer of high energy ATP gamma-phosphate group to L-arginine. In Scylla serrata (Mud crab), this protein is Arginine kinase Scy s 2.